Consider the following 466-residue polypeptide: Adenosylhomocysteinase (466 aa).

3 residues coordinate substrate: threonine 57, aspartate 132, and glutamate 192. Position 193-195 (193-195) interacts with NAD(+); the sequence is TTT. Lysine 222 and aspartate 226 together coordinate substrate. NAD(+) contacts are provided by residues asparagine 227, 256–261, glutamate 279, asparagine 314, 335–337, and asparagine 380; these read GYGDVG and IGH.

It belongs to the adenosylhomocysteinase family. NAD(+) serves as cofactor.

Its subcellular location is the cytoplasm. The catalysed reaction is S-adenosyl-L-homocysteine + H2O = L-homocysteine + adenosine. Its pathway is amino-acid biosynthesis; L-homocysteine biosynthesis; L-homocysteine from S-adenosyl-L-homocysteine: step 1/1. May play a key role in the regulation of the intracellular concentration of adenosylhomocysteine. The sequence is that of Adenosylhomocysteinase from Rhizobium etli (strain ATCC 51251 / DSM 11541 / JCM 21823 / NBRC 15573 / CFN 42).